The primary structure comprises 233 residues: Aquaglyceroporin AqpS (233 aa).

The next 2 helical transmembrane spans lie at 11–31 (VAEA…GIMA) and 40–60 (LALV…VTIL). Positions 69–71 (NPA) match the NPA 1 motif. Transmembrane regions (helical) follow at residues 89 to 109 (AYVI…HLMF), 125 to 145 (AQWL…LAGI), and 152 to 172 (VPWL…STSF). Residues 174–176 (NPA) carry the NPA 2 motif. The chain crosses the membrane as a helical span at residues 193 to 213 (GDLPGFVIAELLGAVCALALM).

Belongs to the MIP/aquaporin (TC 1.A.8) family. NIP (TC 1.A.8.12) subfamily.

It is found in the cell inner membrane. Functionally, involved in resistance to arsenic. Facilitates efflux of arsenite [As(III)]. Arsenate [As(V)] enters the cell through phosphate transport systems and is reduced to arsenite by the arsenate reductase ArsC. Internally generated arsenite flows out of the cell by downhill movement through AqpS. Can also transport the highly toxic methylarsenite [MAs(III)] and the relatively non-toxic methylarsenate [MAs(V)]. May be a component of an methylarsenite resistance pathway in which methylarsenite enters cells via AqpS, is oxidized by ArsH to methylarsenate, which exits the cells via AqpS. This pathway may confer a selective advantage for R.melliloti to grow in the presence of environmental methylarsenicals. The protein is Aquaglyceroporin AqpS of Rhizobium meliloti (strain 1021) (Ensifer meliloti).